A 440-amino-acid chain; its full sequence is tRNA (guanine(37)-N(1))-methyltransferase (440 aa).

Residues H217, 255–256 (DL), 283–284 (DG), and N315 contribute to the S-adenosyl-L-methionine site.

This sequence belongs to the class I-like SAM-binding methyltransferase superfamily. TRM5/TYW2 family. Monomer.

Its subcellular location is the mitochondrion matrix. It is found in the nucleus. The protein localises to the cytoplasm. The enzyme catalyses guanosine(37) in tRNA + S-adenosyl-L-methionine = N(1)-methylguanosine(37) in tRNA + S-adenosyl-L-homocysteine + H(+). Its function is as follows. Specifically methylates the N1 position of guanosine-37 in various cytoplasmic and mitochondrial tRNAs. Methylation is not dependent on the nature of the nucleoside 5' of the target nucleoside. This is the first step in the biosynthesis of wybutosine (yW), a modified base adjacent to the anticodon of tRNAs and required for accurate decoding. The chain is tRNA (guanine(37)-N(1))-methyltransferase from Drosophila pseudoobscura pseudoobscura (Fruit fly).